A 198-amino-acid chain; its full sequence is Superoxide dismutase [Fe] (198 aa).

Fe cation contacts are provided by His27, His74, Asp158, and His162.

The protein belongs to the iron/manganese superoxide dismutase family. In terms of assembly, homodimer. It depends on Fe cation as a cofactor.

The protein resides in the cytoplasm. The enzyme catalyses 2 superoxide + 2 H(+) = H2O2 + O2. Destroys superoxide anion radicals which are normally produced within the cells and which are toxic to biological systems. In Plasmodium malariae, this protein is Superoxide dismutase [Fe] (SODB).